The sequence spans 311 residues: UDP-N-acetylenolpyruvoylglucosamine reductase (311 aa).

An FAD-binding PCMH-type domain is found at 34–198 (MGGAADLFIT…LEGTFRLQKG (165 aa)). The active site involves R177. The active-site Proton donor is the S227. E297 is an active-site residue.

The protein belongs to the MurB family. Requires FAD as cofactor.

Its subcellular location is the cytoplasm. The enzyme catalyses UDP-N-acetyl-alpha-D-muramate + NADP(+) = UDP-N-acetyl-3-O-(1-carboxyvinyl)-alpha-D-glucosamine + NADPH + H(+). The protein operates within cell wall biogenesis; peptidoglycan biosynthesis. In terms of biological role, cell wall formation. This is UDP-N-acetylenolpyruvoylglucosamine reductase from Shouchella clausii (strain KSM-K16) (Alkalihalobacillus clausii).